The chain runs to 444 residues: Glutamate-1-semialdehyde 2,1-aminomutase (444 aa).

N6-(pyridoxal phosphate)lysine is present on lysine 267.

The protein belongs to the class-III pyridoxal-phosphate-dependent aminotransferase family. HemL subfamily. In terms of assembly, homodimer. Pyridoxal 5'-phosphate is required as a cofactor.

The protein resides in the cytoplasm. It carries out the reaction (S)-4-amino-5-oxopentanoate = 5-aminolevulinate. Its pathway is porphyrin-containing compound metabolism; protoporphyrin-IX biosynthesis; 5-aminolevulinate from L-glutamyl-tRNA(Glu): step 2/2. The sequence is that of Glutamate-1-semialdehyde 2,1-aminomutase from Xylella fastidiosa (strain 9a5c).